A 311-amino-acid chain; its full sequence is NAD kinase (311 aa).

Aspartate 88 serves as the catalytic Proton acceptor. NAD(+) is bound by residues aspartate 88–glycine 89, asparagine 162–glutamate 163, arginine 190, aspartate 192, valine 200, and threonine 203–serine 208.

The protein belongs to the NAD kinase family. It depends on a divalent metal cation as a cofactor.

Its subcellular location is the cytoplasm. It catalyses the reaction NAD(+) + ATP = ADP + NADP(+) + H(+). Involved in the regulation of the intracellular balance of NAD and NADP, and is a key enzyme in the biosynthesis of NADP. Catalyzes specifically the phosphorylation on 2'-hydroxyl of the adenosine moiety of NAD to yield NADP. The chain is NAD kinase from Rhodopirellula baltica (strain DSM 10527 / NCIMB 13988 / SH1).